The sequence spans 987 residues: Centrosomal protein of 120 kDa (987 aa).

A C2 1 domain is found at 1–112 (MVSKSDQLLI…QETKQAPKWY (112 aa)). The segment at 352-408 (KTQNEHEPHHSKKRVLTPIKENTHTGPQSPSESPVPPHNQSPPTKDDATESEVESLL) is disordered. The C2 2 domain maps to 438–567 (SEAASGQKIA…LSSEKTRFLG (130 aa)). Positions 670–919 (ENQLKQKELA…RLRQQEQKQY (250 aa)) form a coiled coil. Basic and acidic residues predominate over residues 912-926 (RQQEQKQYPDSREIA). Residues 912 to 937 (RQQEQKQYPDSREIASGKMDGPHGSA) form a disordered region. Phosphoserine is present on Ser936.

The protein belongs to the CEP120 family. As to quaternary structure, interacts with TACC2 and TACC3. Interacts with CCDC52.

The protein resides in the cytoplasm. The protein localises to the cytoskeleton. It is found in the microtubule organizing center. It localises to the centrosome. In terms of biological role, plays a role in the microtubule-dependent coupling of the nucleus and the centrosome. Involved in the processes that regulate centrosome-mediated interkinetic nuclear migration (INM) of neural progenitors and for proper positioning of neurons during brain development. Also implicated in the migration and selfrenewal of neural progenitors. May play a role in centriole duplication during mitosis. Required for the recruitment of CEP295 to the proximal end of new-born centrioles at the centriolar microtubule wall during early S phase in a PLK4-dependent manner. The protein is Centrosomal protein of 120 kDa (CEP120) of Bos taurus (Bovine).